A 445-amino-acid polypeptide reads, in one-letter code: Phosphoglucosamine mutase (445 aa).

The Phosphoserine intermediate role is filled by Ser101. Ser101, Asp240, Asp242, and Asp244 together coordinate Mg(2+). At Ser101 the chain carries Phosphoserine.

This sequence belongs to the phosphohexose mutase family. Requires Mg(2+) as cofactor. Activated by phosphorylation.

The enzyme catalyses alpha-D-glucosamine 1-phosphate = D-glucosamine 6-phosphate. Catalyzes the conversion of glucosamine-6-phosphate to glucosamine-1-phosphate. This Pseudomonas fluorescens (strain SBW25) protein is Phosphoglucosamine mutase.